A 53-amino-acid chain; its full sequence is Ribulose bisphosphate carboxylase large chain (53 aa).

Positions 1–2 (MS) are excised as a propeptide. The residue at position 3 (Pro-3) is an N-acetylproline. Lys-14 is subject to N6,N6,N6-trimethyllysine.

This sequence belongs to the RuBisCO large chain family. Type I subfamily. In terms of assembly, heterohexadecamer of 8 large chains and 8 small chains.

It is found in the plastid. It localises to the chloroplast. The catalysed reaction is 2 (2R)-3-phosphoglycerate + 2 H(+) = D-ribulose 1,5-bisphosphate + CO2 + H2O. The enzyme catalyses D-ribulose 1,5-bisphosphate + O2 = 2-phosphoglycolate + (2R)-3-phosphoglycerate + 2 H(+). In terms of biological role, ruBisCO catalyzes two reactions: the carboxylation of D-ribulose 1,5-bisphosphate, the primary event in carbon dioxide fixation, as well as the oxidative fragmentation of the pentose substrate in the photorespiration process. Both reactions occur simultaneously and in competition at the same active site. This Malus domestica (Apple) protein is Ribulose bisphosphate carboxylase large chain (rbcL).